The primary structure comprises 219 residues: 23.6 kDa heat shock protein, mitochondrial (219 aa).

A mitochondrion-targeting transit peptide spans 1–29 (MALARQCLSKRLAAGCALARPLHAASPVA). Residues 104–219 (QVAETLTRPL…KRSVTEVKVR (116 aa)) enclose the sHSP domain.

It belongs to the small heat shock protein (HSP20) family. May form oligomeric structures.

The protein resides in the mitochondrion. In Oryza sativa subsp. japonica (Rice), this protein is 23.6 kDa heat shock protein, mitochondrial (HSP23.6).